A 708-amino-acid chain; its full sequence is UvrABC system protein B (708 aa).

In terms of domain architecture, Helicase ATP-binding spans 32–419; the sequence is EGIQSGKTAQ…GGEVVEQIIR (388 aa). 45–52 is a binding site for ATP; the sequence is GATGTGKT. The short motif at 98–121 is the Beta-hairpin element; sequence YYDYYQPEAYIPQRDVYIEKDSSI. The Helicase C-terminal domain maps to 436–598; the sequence is QVTHLLEQVR…IVPKTVRKSI (163 aa). In terms of domain architecture, UVR spans 627 to 662; sequence IEYVDKLEQEMLAAAEDLEFERAARLRDRVLQLKEH. Residues 668 to 708 are disordered; that stretch reads SEVEIVDEKSAGKSGGRGRGRRGAKKKGASKGTKIPRPKRG. A compositionally biased stretch (basic residues) spans 683-708; the sequence is GRGRGRRGAKKKGASKGTKIPRPKRG.

The protein belongs to the UvrB family. Forms a heterotetramer with UvrA during the search for lesions. Interacts with UvrC in an incision complex.

The protein localises to the cytoplasm. In terms of biological role, the UvrABC repair system catalyzes the recognition and processing of DNA lesions. A damage recognition complex composed of 2 UvrA and 2 UvrB subunits scans DNA for abnormalities. Upon binding of the UvrA(2)B(2) complex to a putative damaged site, the DNA wraps around one UvrB monomer. DNA wrap is dependent on ATP binding by UvrB and probably causes local melting of the DNA helix, facilitating insertion of UvrB beta-hairpin between the DNA strands. Then UvrB probes one DNA strand for the presence of a lesion. If a lesion is found the UvrA subunits dissociate and the UvrB-DNA preincision complex is formed. This complex is subsequently bound by UvrC and the second UvrB is released. If no lesion is found, the DNA wraps around the other UvrB subunit that will check the other stand for damage. This chain is UvrABC system protein B, found in Rhodopirellula baltica (strain DSM 10527 / NCIMB 13988 / SH1).